The following is a 412-amino-acid chain: Hyaluronidase-3 (412 aa).

Residues 1-22 (MITQLGLTLVVGLTLCLVHVQA) form the signal peptide. 5 disulfide bridges follow: cysteine 42–cysteine 332, cysteine 206–cysteine 221, cysteine 357–cysteine 368, cysteine 362–cysteine 396, and cysteine 398–cysteine 407. The N-linked (GlcNAc...) asparagine glycan is linked to asparagine 69. Glutamate 129 (proton donor) is an active-site residue. N-linked (GlcNAc...) asparagine glycosylation occurs at asparagine 216. The EGF-like domain occupies 353–408 (AATACSHQRCHGHGRCSWKDPGQMEAFLHLQPDDNLGAWKSFRCRCYLGWSGPTCL).

This sequence belongs to the glycosyl hydrolase 56 family. Post-translationally, N-glycosylated.

The protein resides in the secreted. It is found in the cell membrane. It localises to the cytoplasmic vesicle. Its subcellular location is the secretory vesicle. The protein localises to the acrosome. The protein resides in the endoplasmic reticulum. It is found in the early endosome. It catalyses the reaction Random hydrolysis of (1-&gt;4)-linkages between N-acetyl-beta-D-glucosamine and D-glucuronate residues in hyaluronate.. Its function is as follows. Facilitates sperm penetration into the layer of cumulus cells surrounding the egg by digesting hyaluronic acid. Involved in induction of the acrosome reaction in the sperm. Involved in follicular atresia, the breakdown of immature ovarian follicles that are not selected to ovulate. Induces ovarian granulosa cell apoptosis, possibly via apoptotic signaling pathway involving CASP8 and CASP3 activation, and poly(ADP-ribose) polymerase (PARP) cleavage. Has no hyaluronidase activity in embryonic fibroblasts in vitro. Has no hyaluronidase activity in granulosa cells in vitro. This is Hyaluronidase-3 (Hyal3) from Rattus norvegicus (Rat).